The chain runs to 132 residues: Small ribosomal subunit protein uS8 (132 aa).

This sequence belongs to the universal ribosomal protein uS8 family. Part of the 30S ribosomal subunit. Contacts proteins S5 and S12.

In terms of biological role, one of the primary rRNA binding proteins, it binds directly to 16S rRNA central domain where it helps coordinate assembly of the platform of the 30S subunit. The polypeptide is Small ribosomal subunit protein uS8 (Allorhizobium ampelinum (strain ATCC BAA-846 / DSM 112012 / S4) (Agrobacterium vitis (strain S4))).